The sequence spans 362 residues: 3-dehydroquinate synthase (362 aa).

NAD(+) is bound by residues 95 to 99, 119 to 120, lysine 132, and lysine 141; these read GVVGD and TT. Zn(2+) contacts are provided by glutamate 174, histidine 238, and histidine 255.

It belongs to the sugar phosphate cyclases superfamily. Dehydroquinate synthase family. Co(2+) serves as cofactor. The cofactor is Zn(2+). NAD(+) is required as a cofactor.

It localises to the cytoplasm. The catalysed reaction is 7-phospho-2-dehydro-3-deoxy-D-arabino-heptonate = 3-dehydroquinate + phosphate. Its pathway is metabolic intermediate biosynthesis; chorismate biosynthesis; chorismate from D-erythrose 4-phosphate and phosphoenolpyruvate: step 2/7. In terms of biological role, catalyzes the conversion of 3-deoxy-D-arabino-heptulosonate 7-phosphate (DAHP) to dehydroquinate (DHQ). The polypeptide is 3-dehydroquinate synthase (Chlorobium luteolum (strain DSM 273 / BCRC 81028 / 2530) (Pelodictyon luteolum)).